The following is a 179-amino-acid chain: TM2 domain-containing protein Y66D12A.21 (179 aa).

The first 18 residues, 1–18, serve as a signal peptide directing secretion; it reads MRQLLLTLSLISVSASDA. Topologically, residues 19–82 are extracellular; it reads TVKCDDLDPN…IFNRTVPSAC (64 aa). N-linked (GlcNAc...) asparagine glycosylation occurs at Asn-75. The chain crosses the membrane as a helical span at residues 83–105; it reads HYGAHVSYTTTVLLSIFLGFFGI. The region spanning 88–135 is the TM2 domain; it reads VSYTTTVLLSIFLGFFGIDRIYLGYYALGLIKMFSLGGLFVFWLVDII. Residues 106–109 are Cytoplasmic-facing; sequence DRIY. The helical transmembrane segment at 110-132 threads the bilayer; the sequence is LGYYALGLIKMFSLGGLFVFWLV. Over 133–179 the chain is Extracellular; that stretch reads DIILISLQLLGPADGTAYAMAYYGPKAQMIRFDSHTNFSFYTCDGCL. Asn-169 is a glycosylation site (N-linked (GlcNAc...) asparagine).

Belongs to the TM2 family.

Its subcellular location is the membrane. The chain is TM2 domain-containing protein Y66D12A.21 from Caenorhabditis elegans.